A 295-amino-acid polypeptide reads, in one-letter code: Indole-3-glycerol phosphate synthase (295 aa).

Belongs to the TrpC family.

The enzyme catalyses 1-(2-carboxyphenylamino)-1-deoxy-D-ribulose 5-phosphate + H(+) = (1S,2R)-1-C-(indol-3-yl)glycerol 3-phosphate + CO2 + H2O. Its pathway is amino-acid biosynthesis; L-tryptophan biosynthesis; L-tryptophan from chorismate: step 4/5. This chain is Indole-3-glycerol phosphate synthase, found in Synechococcus sp. (strain CC9605).